We begin with the raw amino-acid sequence, 283 residues long: ATP phosphoribosyltransferase (283 aa).

This sequence belongs to the ATP phosphoribosyltransferase family. Long subfamily. The cofactor is Mg(2+).

It is found in the cytoplasm. The catalysed reaction is 1-(5-phospho-beta-D-ribosyl)-ATP + diphosphate = 5-phospho-alpha-D-ribose 1-diphosphate + ATP. It functions in the pathway amino-acid biosynthesis; L-histidine biosynthesis; L-histidine from 5-phospho-alpha-D-ribose 1-diphosphate: step 1/9. Its activity is regulated as follows. Feedback inhibited by histidine. Functionally, catalyzes the condensation of ATP and 5-phosphoribose 1-diphosphate to form N'-(5'-phosphoribosyl)-ATP (PR-ATP). Has a crucial role in the pathway because the rate of histidine biosynthesis seems to be controlled primarily by regulation of HisG enzymatic activity. The protein is ATP phosphoribosyltransferase of Ignicoccus hospitalis (strain KIN4/I / DSM 18386 / JCM 14125).